The chain runs to 343 residues: Heat-inducible transcription repressor HrcA (343 aa).

This sequence belongs to the HrcA family.

Functionally, negative regulator of class I heat shock genes (grpE-dnaK-dnaJ and groELS operons). Prevents heat-shock induction of these operons. This is Heat-inducible transcription repressor HrcA from Bacillus pumilus (strain SAFR-032).